The primary structure comprises 299 residues: Recombination-associated protein RdgC (299 aa).

This sequence belongs to the RdgC family.

The protein localises to the cytoplasm. It localises to the nucleoid. Functionally, may be involved in recombination. This chain is Recombination-associated protein RdgC, found in Bordetella bronchiseptica (strain ATCC BAA-588 / NCTC 13252 / RB50) (Alcaligenes bronchisepticus).